Reading from the N-terminus, the 87-residue chain is UPF0250 protein YPK_3025 (87 aa).

Belongs to the UPF0250 family.

This chain is UPF0250 protein YPK_3025, found in Yersinia pseudotuberculosis serotype O:3 (strain YPIII).